The chain runs to 369 residues: C-C chemokine receptor type 9 (369 aa).

Topologically, residues M1–S48 are extracellular. N-linked (GlcNAc...) asparagine glycosylation is present at N32. Cystine bridges form between C38–C289 and C119–C198. The chain crosses the membrane as a helical span at residues H49–W74. Residues Y75 to M85 lie on the Cytoplasmic side of the membrane. The chain crosses the membrane as a helical span at residues F86–A109. The Extracellular portion of the chain corresponds to G110–K120. Residues V121–Q150 form a helical membrane-spanning segment. The Cytoplasmic portion of the chain corresponds to A151–Q159. A helical transmembrane segment spans residues K160–L185. The Extracellular portion of the chain corresponds to Y186–A208. Residues K209 to Q243 traverse the membrane as a helical segment. The Cytoplasmic segment spans residues A244–S248. The chain crosses the membrane as a helical span at residues K249–A283. Over M284–T290 the chain is Extracellular. A helical transmembrane segment spans residues I291–G321. The Cytoplasmic portion of the chain corresponds to E322–L369.

Belongs to the G-protein coupled receptor 1 family. In terms of tissue distribution, highly expressed in the thymus and low in lymph nodes and spleen.

It localises to the cell membrane. Receptor for chemokine SCYA25/TECK. Subsequently transduces a signal by increasing the intracellular calcium ions level. The polypeptide is C-C chemokine receptor type 9 (Ccr9) (Mus musculus (Mouse)).